We begin with the raw amino-acid sequence, 290 residues long: Arylamine N-acetyltransferase 1 (290 aa).

M1 carries the N-acetylmethionine modification. C68 serves as the catalytic Acyl-thioester intermediate. A CoA-binding site is contributed by S103. 106 to 107 (IH) serves as a coordination point for substrate. Catalysis depends on residues H107 and D122. 2 residues coordinate CoA: Y208 and S287.

It belongs to the arylamine N-acetyltransferase family.

The protein resides in the cytoplasm. The enzyme catalyses an arylamine + acetyl-CoA = an N-acetylarylamine + CoA. Its function is as follows. Participates in the detoxification of a plethora of hydrazine and arylamine drugs. This is Arylamine N-acetyltransferase 1 (NAT1) from Mesocricetus auratus (Golden hamster).